We begin with the raw amino-acid sequence, 108 residues long: Cytochrome c-555 (108 aa).

An N-terminal signal peptide occupies residues 1–22 (MSRFVSAALVGAALLVSGNAFA). Heme c contacts are provided by C36, C39, H40, and M82.

Post-translationally, binds 1 heme c group covalently per subunit.

This basic c-type monoheme cytochrome has been found exclusively in the green photosynthetic bacteria, although its role in bacterial photosynthesis is not established. It has an unusually low redox potential compared with mitochondrial cytochrome c. It is reactive with cytochrome c oxidases but not with reductases. In Chlorobaculum tepidum (strain ATCC 49652 / DSM 12025 / NBRC 103806 / TLS) (Chlorobium tepidum), this protein is Cytochrome c-555.